The sequence spans 415 residues: L-cysteine:1D-myo-inositol 2-amino-2-deoxy-alpha-D-glucopyranoside ligase (415 aa).

C43 serves as a coordination point for Zn(2+). Residues 43 to 46 (CGIT), T58, and 81 to 83 (NIT) contribute to the L-cysteinyl-5'-AMP site. The short motif at 45-55 (ITPYDATHLGH) is the 'HIGH' region element. Residues 187–192 (ERGGDP) carry the 'ERGGDP' region motif. W227 is a binding site for L-cysteinyl-5'-AMP. C231 contributes to the Zn(2+) binding site. An L-cysteinyl-5'-AMP-binding site is contributed by 249 to 251 (GSD). Zn(2+) is bound at residue H256. I283 is a binding site for L-cysteinyl-5'-AMP. Positions 289–293 (KMSKS) match the 'KMSKS' region motif.

It belongs to the class-I aminoacyl-tRNA synthetase family. MshC subfamily. As to quaternary structure, monomer. Zn(2+) is required as a cofactor.

It catalyses the reaction 1D-myo-inositol 2-amino-2-deoxy-alpha-D-glucopyranoside + L-cysteine + ATP = 1D-myo-inositol 2-(L-cysteinylamino)-2-deoxy-alpha-D-glucopyranoside + AMP + diphosphate + H(+). Its function is as follows. Catalyzes the ATP-dependent condensation of GlcN-Ins and L-cysteine to form L-Cys-GlcN-Ins. The sequence is that of L-cysteine:1D-myo-inositol 2-amino-2-deoxy-alpha-D-glucopyranoside ligase from Mycobacterium sp. (strain JLS).